The sequence spans 246 residues: Probable transcriptional regulatory protein WP1214 (246 aa).

The interval 1–22 (MAGHSQFSNIKHRKGAQDAKRS) is disordered.

This sequence belongs to the TACO1 family.

The protein localises to the cytoplasm. This is Probable transcriptional regulatory protein WP1214 from Wolbachia pipientis subsp. Culex pipiens (strain wPip).